Consider the following 260-residue polypeptide: Flap endonuclease Xni (260 aa).

D104 contributes to the Mg(2+) binding site. The 5'-3' exonuclease domain maps to 160–250 (VSPQQLTDYW…NGNLQQLRLP (91 aa)). K(+) is bound by residues L171, A172, P180, V182, and I185. The interval 184 to 189 (GIGPKS) is interaction with DNA.

It belongs to the Xni family. Requires Mg(2+) as cofactor. K(+) is required as a cofactor.

Its function is as follows. Has flap endonuclease activity. During DNA replication, flap endonucleases cleave the 5'-overhanging flap structure that is generated by displacement synthesis when DNA polymerase encounters the 5'-end of a downstream Okazaki fragment. The sequence is that of Flap endonuclease Xni from Pectobacterium atrosepticum (strain SCRI 1043 / ATCC BAA-672) (Erwinia carotovora subsp. atroseptica).